The primary structure comprises 150 residues: Catabolic 3-dehydroquinase 1 (150 aa).

The active-site Proton acceptor is Tyr-24. Positions 75, 81, and 88 each coordinate substrate. His-101 (proton donor) is an active-site residue. Residues 102–103 (VS) and Arg-112 contribute to the substrate site.

It belongs to the type-II 3-dehydroquinase family. As to quaternary structure, homododecamer. Adopts a ring-like structure, composed of an arrangement of two hexameric rings stacked on top of one another.

It carries out the reaction 3-dehydroquinate = 3-dehydroshikimate + H2O. Its pathway is aromatic compound metabolism; 3,4-dihydroxybenzoate biosynthesis; 3,4-dihydroxybenzoate from 3-dehydroquinate: step 1/2. In terms of biological role, is involved in the catabolism of quinate. Allows the utilization of quinate as carbon source via the beta-ketoadipate pathway. In Neosartorya fischeri (strain ATCC 1020 / DSM 3700 / CBS 544.65 / FGSC A1164 / JCM 1740 / NRRL 181 / WB 181) (Aspergillus fischerianus), this protein is Catabolic 3-dehydroquinase 1.